The primary structure comprises 243 residues: DNA repair protein RecO (243 aa).

The protein belongs to the RecO family.

Functionally, involved in DNA repair and RecF pathway recombination. This chain is DNA repair protein RecO, found in Azoarcus sp. (strain BH72).